Reading from the N-terminus, the 388-residue chain is Succinate--CoA ligase [ADP-forming] subunit beta (388 aa).

The ATP-grasp domain maps to 9 to 244 (KELFARRGLP…VTQEDAREAH (236 aa)). ATP is bound by residues K46, 53–55 (GRG), E99, T102, and E107. 2 residues coordinate Mg(2+): N199 and D213. Substrate-binding positions include N264 and 321–323 (GIV).

This sequence belongs to the succinate/malate CoA ligase beta subunit family. As to quaternary structure, heterotetramer of two alpha and two beta subunits. Requires Mg(2+) as cofactor.

It catalyses the reaction succinate + ATP + CoA = succinyl-CoA + ADP + phosphate. The catalysed reaction is GTP + succinate + CoA = succinyl-CoA + GDP + phosphate. The protein operates within carbohydrate metabolism; tricarboxylic acid cycle; succinate from succinyl-CoA (ligase route): step 1/1. In terms of biological role, succinyl-CoA synthetase functions in the citric acid cycle (TCA), coupling the hydrolysis of succinyl-CoA to the synthesis of either ATP or GTP and thus represents the only step of substrate-level phosphorylation in the TCA. The beta subunit provides nucleotide specificity of the enzyme and binds the substrate succinate, while the binding sites for coenzyme A and phosphate are found in the alpha subunit. In Hamiltonella defensa subsp. Acyrthosiphon pisum (strain 5AT), this protein is Succinate--CoA ligase [ADP-forming] subunit beta.